A 191-amino-acid polypeptide reads, in one-letter code: uncharacterized protein (191 aa).

Helical transmembrane passes span Ile4 to Phe24, Lys26 to Cys46, Gly68 to Ile88, Ala90 to Ile110, Leu135 to Ile155, and Leu168 to Met188.

The protein resides in the cell membrane. This is an uncharacterized protein from Methanocaldococcus jannaschii (strain ATCC 43067 / DSM 2661 / JAL-1 / JCM 10045 / NBRC 100440) (Methanococcus jannaschii).